A 90-amino-acid polypeptide reads, in one-letter code: Putative beta-neurotoxin RjAa2f (90 aa).

Positions 1–18 (MKILIFIIASFMLIGVEC) are cleaved as a signal peptide. The LCN-type CS-alpha/beta domain occupies 19 to 89 (KEGYPMGSDG…VWDSKTNKCG (71 aa)). 4 disulfide bridges follow: cysteine 29/cysteine 88, cysteine 33/cysteine 62, cysteine 40/cysteine 69, and cysteine 44/cysteine 71.

This sequence belongs to the long (4 C-C) scorpion toxin superfamily. Sodium channel inhibitor family. Beta subfamily. In terms of tissue distribution, expressed by the venom gland.

The protein resides in the secreted. In terms of biological role, beta toxins bind voltage-independently at site-4 of sodium channels (Nav) and shift the voltage of activation toward more negative potentials thereby affecting sodium channel activation and promoting spontaneous and repetitive firing. In Rhopalurus junceus (Caribbean blue scorpion), this protein is Putative beta-neurotoxin RjAa2f.